The chain runs to 260 residues: Indole-3-glycerol phosphate synthase (260 aa).

The protein belongs to the TrpC family.

It carries out the reaction 1-(2-carboxyphenylamino)-1-deoxy-D-ribulose 5-phosphate + H(+) = (1S,2R)-1-C-(indol-3-yl)glycerol 3-phosphate + CO2 + H2O. The protein operates within amino-acid biosynthesis; L-tryptophan biosynthesis; L-tryptophan from chorismate: step 4/5. This is Indole-3-glycerol phosphate synthase from Neisseria gonorrhoeae (strain ATCC 700825 / FA 1090).